A 44-amino-acid chain; its full sequence is Relaxin (44 aa).

Position 1 is a pyrrolidone carboxylic acid (Gln-1). 3 disulfides stabilise this stretch: Cys-3-Cys-31, Cys-15-Cys-44, and Cys-30-Cys-35.

It belongs to the insulin family. As to quaternary structure, heterodimer of a B chain and an A chain linked by two disulfide bonds.

It localises to the secreted. The protein is Relaxin of Carcharias taurus (Sand tiger shark).